Here is a 390-residue protein sequence, read N- to C-terminus: Putative 8-amino-7-oxononanoate synthase (390 aa).

Residue Arg-20 coordinates substrate. 107–108 (GY) is a pyridoxal 5'-phosphate binding site. Residue His-132 participates in substrate binding. Residues Ser-181, 206-209 (DDAH), and 237-240 (TLGK) each bind pyridoxal 5'-phosphate. At Lys-240 the chain carries N6-(pyridoxal phosphate)lysine. Thr-356 is a substrate binding site.

Belongs to the class-II pyridoxal-phosphate-dependent aminotransferase family. BioF subfamily. In terms of assembly, homodimer. Requires pyridoxal 5'-phosphate as cofactor.

The catalysed reaction is 6-carboxyhexanoyl-[ACP] + L-alanine + H(+) = (8S)-8-amino-7-oxononanoate + holo-[ACP] + CO2. It functions in the pathway cofactor biosynthesis; biotin biosynthesis. Catalyzes the decarboxylative condensation of pimeloyl-[acyl-carrier protein] and L-alanine to produce 8-amino-7-oxononanoate (AON), [acyl-carrier protein], and carbon dioxide. This chain is Putative 8-amino-7-oxononanoate synthase (bioF), found in Syntrophotalea carbinolica (strain DSM 2380 / NBRC 103641 / GraBd1) (Pelobacter carbinolicus).